The chain runs to 347 residues: Protein-glutamate methylesterase/protein-glutamine glutaminase (347 aa).

The Response regulatory domain maps to 6–123 (RVLVVDDSPT…HRPFGDLAEK (118 aa)). 4-aspartylphosphate is present on aspartate 57. The CheB-type methylesterase domain maps to 150–342 (FRVGRKIVAI…EEILKLTAAR (193 aa)). Residues serine 162, histidine 188, and aspartate 284 contribute to the active site.

Belongs to the CheB family. Phosphorylated by CheA. Phosphorylation of the N-terminal regulatory domain activates the methylesterase activity.

It is found in the cytoplasm. The enzyme catalyses [protein]-L-glutamate 5-O-methyl ester + H2O = L-glutamyl-[protein] + methanol + H(+). It carries out the reaction L-glutaminyl-[protein] + H2O = L-glutamyl-[protein] + NH4(+). Functionally, involved in chemotaxis. Part of a chemotaxis signal transduction system that modulates chemotaxis in response to various stimuli. Catalyzes the demethylation of specific methylglutamate residues introduced into the chemoreceptors (methyl-accepting chemotaxis proteins or MCP) by CheR. Also mediates the irreversible deamidation of specific glutamine residues to glutamic acid. This Rhizobium etli (strain ATCC 51251 / DSM 11541 / JCM 21823 / NBRC 15573 / CFN 42) protein is Protein-glutamate methylesterase/protein-glutamine glutaminase.